The chain runs to 194 residues: dTTP/UTP pyrophosphatase (194 aa).

Asp-73 (proton acceptor) is an active-site residue.

It belongs to the Maf family. YhdE subfamily. A divalent metal cation is required as a cofactor.

Its subcellular location is the cytoplasm. The enzyme catalyses dTTP + H2O = dTMP + diphosphate + H(+). It carries out the reaction UTP + H2O = UMP + diphosphate + H(+). Its function is as follows. Nucleoside triphosphate pyrophosphatase that hydrolyzes dTTP and UTP. May have a dual role in cell division arrest and in preventing the incorporation of modified nucleotides into cellular nucleic acids. The chain is dTTP/UTP pyrophosphatase from Clostridium botulinum (strain Loch Maree / Type A3).